Reading from the N-terminus, the 1037-residue chain is Tyrosine-protein kinase-like otk (1037 aa).

An N-terminal signal peptide occupies residues Met-1 to Ala-23. Ig-like C2-type domains lie at Ser-24–Ser-109, Pro-110–Ser-199, Pro-251–Asn-365, Pro-368–Asn-464, and Pro-469–Val-559. The Extracellular segment spans residues Ser-24 to Ala-582. Disulfide bonds link Cys-47–Cys-96, Cys-138–Cys-188, Cys-276–Cys-354, Cys-399–Cys-448, and Cys-491–Cys-543. N-linked (GlcNAc...) asparagine glycans are attached at residues Asn-336, Asn-418, Asn-430, Asn-445, Asn-513, and Asn-525. The chain crosses the membrane as a helical span at residues Val-583–Trp-603. Topologically, residues Cys-604–Lys-1037 are cytoplasmic. Disordered regions lie at residues Ala-623–Tyr-683 and Ser-720–Glu-777. A compositionally biased stretch (polar residues) spans Lys-658–Arg-676. Ser-681 is modified (phosphoserine). One can recognise a Protein kinase; inactive domain in the interval Leu-693–Met-1031. Over residues Ser-723–Ser-734 the composition is skewed to basic and acidic residues. The span at Gly-739–Ser-749 shows a compositional bias: gly residues. Over residues Asp-768 to Glu-777 the composition is skewed to acidic residues.

This sequence belongs to the protein kinase superfamily. Tyr protein kinase family. Insulin receptor subfamily. As to quaternary structure, interacts with plexA; component of a receptor complex that mediates the repulsive signaling in response to Semaphorin ligands.

It localises to the cell membrane. Acts as a calcium-dependent, homophilic cell adhesion molecule that regulates neural recognition during the development of the nervous system. Component of the repulsive Plexin signaling response to regulate motor axon guidance at the embryonic stage. Also component of a receptor complex that is required in the adult visual system to innervate the lamina layer; specific targeting of R1-R6 axons. This Drosophila pseudoobscura pseudoobscura (Fruit fly) protein is Tyrosine-protein kinase-like otk.